Reading from the N-terminus, the 424-residue chain is UDP-N-acetylglucosamine 1-carboxyvinyltransferase (424 aa).

22–23 serves as a coordination point for phosphoenolpyruvate; that stretch reads KN. Arg98 lines the UDP-N-acetyl-alpha-D-glucosamine pocket. Cys122 acts as the Proton donor in catalysis. Cys122 is modified (2-(S-cysteinyl)pyruvic acid O-phosphothioketal). UDP-N-acetyl-alpha-D-glucosamine-binding positions include 127-131, Asp312, and Ile334; that span reads RPVDQ.

It belongs to the EPSP synthase family. MurA subfamily.

The protein localises to the cytoplasm. The catalysed reaction is phosphoenolpyruvate + UDP-N-acetyl-alpha-D-glucosamine = UDP-N-acetyl-3-O-(1-carboxyvinyl)-alpha-D-glucosamine + phosphate. The protein operates within cell wall biogenesis; peptidoglycan biosynthesis. In terms of biological role, cell wall formation. Adds enolpyruvyl to UDP-N-acetylglucosamine. The sequence is that of UDP-N-acetylglucosamine 1-carboxyvinyltransferase from Xanthomonas oryzae pv. oryzae (strain MAFF 311018).